A 682-amino-acid polypeptide reads, in one-letter code: Potassium-transporting ATPase ATP-binding subunit (682 aa).

The next 4 membrane-spanning stretches (helical) occupy residues proline 34 to valine 54, isoleucine 58 to phenylalanine 78, isoleucine 219 to leucine 239, and valine 254 to isoleucine 274. Aspartate 307 functions as the 4-aspartylphosphate intermediate in the catalytic mechanism. Residues aspartate 344, glutamate 348, phenylalanine 377–serine 384, and lysine 395 each bind ATP. 2 residues coordinate Mg(2+): aspartate 518 and aspartate 522. Helical transmembrane passes span phenylalanine 588–methionine 608, alanine 616–leucine 636, and leucine 662–alanine 682.

The protein belongs to the cation transport ATPase (P-type) (TC 3.A.3) family. Type IA subfamily. The system is composed of three essential subunits: KdpA, KdpB and KdpC.

The protein resides in the cell inner membrane. It catalyses the reaction K(+)(out) + ATP + H2O = K(+)(in) + ADP + phosphate + H(+). Part of the high-affinity ATP-driven potassium transport (or Kdp) system, which catalyzes the hydrolysis of ATP coupled with the electrogenic transport of potassium into the cytoplasm. This subunit is responsible for energy coupling to the transport system and for the release of the potassium ions to the cytoplasm. This Salmonella newport (strain SL254) protein is Potassium-transporting ATPase ATP-binding subunit.